Here is a 163-residue protein sequence, read N- to C-terminus: ATP synthase subunit b 2 (163 aa).

The chain crosses the membrane as a helical span at residues 5-25 (SLATLWATIALIIFLGVAIYI).

This sequence belongs to the ATPase B chain family. As to quaternary structure, F-type ATPases have 2 components, F(1) - the catalytic core - and F(0) - the membrane proton channel. F(1) has five subunits: alpha(3), beta(3), gamma(1), delta(1), epsilon(1). F(0) has three main subunits: a(1), b(2) and c(10-14). The alpha and beta chains form an alternating ring which encloses part of the gamma chain. F(1) is attached to F(0) by a central stalk formed by the gamma and epsilon chains, while a peripheral stalk is formed by the delta and b chains.

It is found in the cell inner membrane. F(1)F(0) ATP synthase produces ATP from ADP in the presence of a proton or sodium gradient. F-type ATPases consist of two structural domains, F(1) containing the extramembraneous catalytic core and F(0) containing the membrane proton channel, linked together by a central stalk and a peripheral stalk. During catalysis, ATP synthesis in the catalytic domain of F(1) is coupled via a rotary mechanism of the central stalk subunits to proton translocation. In terms of biological role, component of the F(0) channel, it forms part of the peripheral stalk, linking F(1) to F(0). This Mesorhizobium japonicum (strain LMG 29417 / CECT 9101 / MAFF 303099) (Mesorhizobium loti (strain MAFF 303099)) protein is ATP synthase subunit b 2.